The chain runs to 104 residues: Large ribosomal subunit protein bL21 (104 aa).

It belongs to the bacterial ribosomal protein bL21 family. Part of the 50S ribosomal subunit. Contacts protein L20.

This protein binds to 23S rRNA in the presence of protein L20. In Helicobacter pylori (strain G27), this protein is Large ribosomal subunit protein bL21.